A 458-amino-acid polypeptide reads, in one-letter code: MSKDKLWGGRFTQPTDAFVEEFTASIQFDKRLYHQDIRGSIAHARMLGKQGIIPQADVEAIVEGLQQILLQIEEGSFDFSISLEDIHMNIESRLSARIGEAGKRLHTGRSRNDQVALDIRLYLRDEIVEITSYIDLLIDALLTQAEENVDVVMPGFTHLQTAQPILFAHHMLAYVEMFKRDSGRMEDCLKRVNVLPLGAGALAGTTFPIDRDYVAEQLGFPAITRNSLDSVSDRDFALEFISASSILMMHLSRLSEELILWSTSQFKFIELSDGFCTGSSIMPQKKNPDVPELVRGKTGRVYGNLMALLTVMKSLPLAYNKDMQEDKEPLFDTIDTVKGSLKVFSDMIREMSIYPEAMGRAAGQGFSTATDVADYLVRKGVAFRDAHEAVGKAVAYCVENEMELTDLTLTEWELFSPRFEQDIFEAITVDACIDARNVPGGTAREQVKGEIARCRKGK.

It belongs to the lyase 1 family. Argininosuccinate lyase subfamily.

The protein localises to the cytoplasm. It carries out the reaction 2-(N(omega)-L-arginino)succinate = fumarate + L-arginine. The protein operates within amino-acid biosynthesis; L-arginine biosynthesis; L-arginine from L-ornithine and carbamoyl phosphate: step 3/3. The protein is Argininosuccinate lyase of Pelobacter propionicus (strain DSM 2379 / NBRC 103807 / OttBd1).